Reading from the N-terminus, the 233-residue chain is Pilin-like protein PilA3 (233 aa).

The propeptide at 1–4 (MKRG) is leader sequence. N-methylphenylalanine is present on Phe-5. Residues 5-25 (FTLVEVLVAMAILVVVLAVGV) form a helical membrane-spanning segment. Positions 121–143 (LRRSDVNATPSSGSDCTTPPPNS) are disordered. Over residues 126 to 137 (VNATPSSGSDCT) the composition is skewed to polar residues.

The protein localises to the cell inner membrane. It is found in the cell outer membrane. It localises to the periplasm. Its function is as follows. Plays an essential role in natural DNA transformation but is not required for pilus biogenesis. The polypeptide is Pilin-like protein PilA3 (pilA3) (Thermus thermophilus (strain ATCC BAA-163 / DSM 7039 / HB27)).